The chain runs to 167 residues: U-scoloptoxin(08)-Er5b (167 aa).

Residues methionine 1–glycine 22 form the signal peptide. A propeptide spanning residues glutamate 23–arginine 94 is cleaved from the precursor. RLWRNWE repeat units lie at residues arginine 34–glutamate 40, arginine 61–glutamate 67, and arginine 86–glutamate 92. Position 95 is a pyrrolidone carboxylic acid (glutamine 95). One copy of the RLWRNWE 4; approximate repeat lies at glutamate 107–glutamate 113. Residues tryptophan 112–arginine 118 constitute a propeptide that is removed on maturation. Glutamine 119 bears the Pyrrolidone carboxylic acid mark. The RLWRNWE 5 repeat unit spans residues arginine 134–glutamate 140. Residues tryptophan 139–glutamate 167 constitute a propeptide that is removed on maturation. The tract at residues arginine 147–glutamate 167 is disordered.

It belongs to the scoloptoxin-08 family. In terms of tissue distribution, expressed by the venom gland.

The protein resides in the secreted. This is U-scoloptoxin(08)-Er5b from Ethmostigmus rubripes (Giant centipede).